Consider the following 137-residue polypeptide: Large ribosomal subunit protein uL16 (137 aa).

It belongs to the universal ribosomal protein uL16 family. Part of the 50S ribosomal subunit.

In terms of biological role, binds 23S rRNA and is also seen to make contacts with the A and possibly P site tRNAs. This chain is Large ribosomal subunit protein uL16, found in Azotobacter vinelandii (strain DJ / ATCC BAA-1303).